The primary structure comprises 476 residues: Chromosomal replication initiator protein DnaA (476 aa).

Residues 1–73 (MTNSEQERWS…LSAWQAEMPE (73 aa)) form a domain I, interacts with DnaA modulators region. The segment at 73 to 132 (EVHRIDLSVRTAMRCATPAKEAPAAVEARRPERSDAKPVSDARAPVMTPVAASHDALGGS) is domain II. The disordered stretch occupies residues 92-115 (KEAPAAVEARRPERSDAKPVSDAR). Over residues 99–112 (EARRPERSDAKPVS) the composition is skewed to basic and acidic residues. The domain III, AAA+ region stretch occupies residues 133–355 (PLDPRLTFAS…GAINRLLAHS (223 aa)). Positions 180, 182, 183, and 184 each coordinate ATP. Positions 356–476 (KLNNQPVTLD…VESLKRQLQD (121 aa)) are domain IV, binds dsDNA.

It belongs to the DnaA family. As to quaternary structure, oligomerizes as a right-handed, spiral filament on DNA at oriC.

The protein localises to the cytoplasm. In terms of biological role, plays an essential role in the initiation and regulation of chromosomal replication. ATP-DnaA binds to the origin of replication (oriC) to initiate formation of the DNA replication initiation complex once per cell cycle. Binds the DnaA box (a 9 base pair repeat at the origin) and separates the double-stranded (ds)DNA. Forms a right-handed helical filament on oriC DNA; dsDNA binds to the exterior of the filament while single-stranded (ss)DNA is stabiized in the filament's interior. The ATP-DnaA-oriC complex binds and stabilizes one strand of the AT-rich DNA unwinding element (DUE), permitting loading of DNA polymerase. After initiation quickly degrades to an ADP-DnaA complex that is not apt for DNA replication. Binds acidic phospholipids. The sequence is that of Chromosomal replication initiator protein DnaA from Bradyrhizobium sp. (strain ORS 278).